The primary structure comprises 346 residues: Phosphoribosylformylglycinamidine cyclo-ligase (346 aa).

This sequence belongs to the AIR synthase family.

Its subcellular location is the cytoplasm. The enzyme catalyses 2-formamido-N(1)-(5-O-phospho-beta-D-ribosyl)acetamidine + ATP = 5-amino-1-(5-phospho-beta-D-ribosyl)imidazole + ADP + phosphate + H(+). It functions in the pathway purine metabolism; IMP biosynthesis via de novo pathway; 5-amino-1-(5-phospho-D-ribosyl)imidazole from N(2)-formyl-N(1)-(5-phospho-D-ribosyl)glycinamide: step 2/2. This is Phosphoribosylformylglycinamidine cyclo-ligase from Bacillus licheniformis (strain ATCC 14580 / DSM 13 / JCM 2505 / CCUG 7422 / NBRC 12200 / NCIMB 9375 / NCTC 10341 / NRRL NRS-1264 / Gibson 46).